Here is a 285-residue protein sequence, read N- to C-terminus: Small ribosomal subunit protein uS2 (285 aa).

Residues 228-285 form a disordered region; sequence RAGLSADKDAKPEAGAGEPLAEWEQELLSQAAPAAEAEAAPAAEAEAAPAAEAPATEA. Positions 258–285 are enriched in low complexity; that stretch reads AAPAAEAEAAPAAEAEAAPAAEAPATEA.

The protein belongs to the universal ribosomal protein uS2 family.

This is Small ribosomal subunit protein uS2 from Rhodococcus erythropolis (strain PR4 / NBRC 100887).